The primary structure comprises 90 residues: Large ribosomal subunit protein bL27 (90 aa).

The disordered stretch occupies residues 1-22 (MAHKKAGGSTRNGRDSNPKMLG).

Belongs to the bacterial ribosomal protein bL27 family.

This Coxiella burnetii (strain CbuK_Q154) (Coxiella burnetii (strain Q154)) protein is Large ribosomal subunit protein bL27.